Consider the following 106-residue polypeptide: ATP-dependent Clp protease adapter protein ClpS (106 aa).

Residues 1-13 (MGNNSTWSQSENL) are compositionally biased toward polar residues. The tract at residues 1–21 (MGNNSTWSQSENLTADKQKEK) is disordered.

It belongs to the ClpS family. As to quaternary structure, binds to the N-terminal domain of the chaperone ClpA.

Functionally, involved in the modulation of the specificity of the ClpAP-mediated ATP-dependent protein degradation. The polypeptide is ATP-dependent Clp protease adapter protein ClpS (Pectobacterium carotovorum subsp. carotovorum (strain PC1)).